A 638-amino-acid chain; its full sequence is XK-related protein 6 (638 aa).

2 disordered regions span residues 24–43 (VGSG…GGDG) and 82–117 (RSAA…PASP). The span at 33–43 (PGGGGCGGGDG) shows a compositional bias: gly residues. 7 helical membrane-spanning segments follow: residues 127-147 (LWIV…LWLA), 158-178 (CFGL…SLSF), 315-335 (TLPC…LASY), 369-389 (VISF…FVVV), 410-430 (WEEI…WFNV), 439-459 (MFAY…LWYF), and 470-490 (AVPA…LMLL).

The protein belongs to the XK family.

It is found in the cell membrane. The chain is XK-related protein 6 from Mus musculus (Mouse).